The primary structure comprises 233 residues: Protein FAM204A (233 aa).

Positions 1–126 are disordered; the sequence is MWSGLLPPGL…HSEPSSNETQ (126 aa). Over residues 13–24 the composition is skewed to acidic residues; it reads SDAESNSEDEAT. Residues 39-58 are compositionally biased toward basic and acidic residues; sequence ESIRKTEIIDFSTDEPKTET. Residues 97 to 109 show a composition bias toward basic residues; sequence FRGKRRKRSRKDK. Residues 144–164 are a coiled coil; the sequence is VKRKKVEKSGLEKRIDQAVEE.

The protein is Protein FAM204A (FAM204A) of Homo sapiens (Human).